A 473-amino-acid polypeptide reads, in one-letter code: Glutamate--tRNA ligase 1 (473 aa).

A 'HIGH' region motif is present at residues 23 to 33 (PSPTGLLHVGG). A 'KMSKS' region motif is present at residues 252–256 (KLSKR). Lys-255 is a binding site for ATP.

Belongs to the class-I aminoacyl-tRNA synthetase family. Glutamate--tRNA ligase type 1 subfamily. Monomer.

The protein resides in the cytoplasm. The catalysed reaction is tRNA(Glu) + L-glutamate + ATP = L-glutamyl-tRNA(Glu) + AMP + diphosphate. In terms of biological role, catalyzes the attachment of glutamate to tRNA(Glu) in a two-step reaction: glutamate is first activated by ATP to form Glu-AMP and then transferred to the acceptor end of tRNA(Glu). The chain is Glutamate--tRNA ligase 1 from Granulibacter bethesdensis (strain ATCC BAA-1260 / CGDNIH1).